The sequence spans 410 residues: WD repeat and FYVE domain-containing protein 1 (410 aa).

WD repeat units follow at residues G22–P61, T66–N105, A112–G150, F153–I192, G197–L236, and G240–P279. The segment at W281–K352 adopts an FYVE-type zinc-finger fold. Residues C287, C290, C314, C317, C322, C325, C344, and C347 each contribute to the Zn(2+) site. The stretch at E364–L403 is one WD 7 repeat. The residue at position 408 (S408) is a Phosphoserine.

In terms of assembly, binds PtdIns3P in vitro with high specificity over other phosphoinositides. Interacts (via WD repeat 2) with tyrosine-phosphorylated TLR3 (via TIR domain) in response to poly(I:C). Interacts with TICAM1 in response to poly(I:C). Interacts with TLR4 in response to LPS.

Its subcellular location is the early endosome. Functionally, positively regulates TLR3- and TLR4-mediated signaling pathways by bridging the interaction between TLR3 or TLR4 and TICAM1. Promotes TLR3/4 ligand-induced activation of transcription factors IRF3 and NF-kappa-B, as well as the production of IFN-beta and inflammatory cytokines. The sequence is that of WD repeat and FYVE domain-containing protein 1 (WDFY1) from Homo sapiens (Human).